A 158-amino-acid chain; its full sequence is Cyclic pyranopterin monophosphate synthase (158 aa).

Substrate-binding positions include 75–77 (LCH) and 113–114 (ME). Asp128 is an active-site residue.

Belongs to the MoaC family. As to quaternary structure, homohexamer; trimer of dimers.

The enzyme catalyses (8S)-3',8-cyclo-7,8-dihydroguanosine 5'-triphosphate = cyclic pyranopterin phosphate + diphosphate. It functions in the pathway cofactor biosynthesis; molybdopterin biosynthesis. Functionally, catalyzes the conversion of (8S)-3',8-cyclo-7,8-dihydroguanosine 5'-triphosphate to cyclic pyranopterin monophosphate (cPMP). In Roseiflexus sp. (strain RS-1), this protein is Cyclic pyranopterin monophosphate synthase.